A 457-amino-acid chain; its full sequence is Dolichol phosphate-mannose mannosyltransferase (457 aa).

The Cytoplasmic portion of the chain corresponds to 1-12 (MKRLAKAAFSQN). The helical transmembrane segment at 13–33 (SLTAPIVSTFVYLISVVRVVL) threads the bilayer. The Extracellular portion of the chain corresponds to 34–91 (NGNWPVTSSDTAMFQHIGWMVFSGKRYYIDAWDPKPPLTLELATIIAYISNGDPHLQH). A helical transmembrane segment spans residues 92-112 (TLSVVSTIVAGILLTYLISHI). The Cytoplasmic portion of the chain corresponds to 113 to 120 (TSEITGNQ). The helical transmembrane segment at 121 to 141 (FAGLLSGIVFITFPVIHYSAV) threads the bilayer. The Extracellular segment spans residues 142-173 (FGYEPKYFVFLFGLGSIYLSRNPKPILSGAAA). Residues 174-194 (AASAGMWQFAIIFPIISFGII) form a helical membrane-spanning segment. At 195–211 (SRRKSKDLILKYVFGAT) the chain is on the cytoplasmic side. A helical transmembrane segment spans residues 212–232 (IIAFISLLPIYLQGGLVAMTV). Residues 233–259 (EVIIAPLYAGETQSFLYRLVKGVTHLK) lie on the Extracellular side of the membrane. A helical membrane pass occupies residues 260-280 (LMIPIALLGMAGILLGFLDDI). The Cytoplasmic segment spans residues 281 to 283 (RER). A helical transmembrane segment spans residues 284–304 (WWVVGLLLWFCIQIFILDYDG). Residues 305-307 (ADD) lie on the Extracellular side of the membrane. A helical transmembrane segment spans residues 308-328 (LFLGIILVSMGIGFAFEKLST). The Cytoplasmic portion of the chain corresponds to 329–337 (KYESERINS). Residues 338–358 (IVTAVVVCMLIWQVVTLGGVG) form a helical membrane-spanning segment. Residues 359-457 (VITNPYSYSG…EEKCGKWRLP (99 aa)) lie on the Extracellular side of the membrane.

The protein localises to the cell membrane. The protein operates within cell surface structure biogenesis; S-layer biogenesis. Its pathway is protein modification; protein glycosylation. Its function is as follows. Involved in the assembly of a N-linked pentasaccharide that decorates the S-layer glycoprotein and flagellins. Transfers mannose, the terminal pentasaccharide residue, from its dedicated dolichol phosphate carrier to the protein-bound glycan comprising the first four subunits of the N-linked pentasaccharide. The sequence is that of Dolichol phosphate-mannose mannosyltransferase (aglS) from Haloferax volcanii (strain ATCC 29605 / DSM 3757 / JCM 8879 / NBRC 14742 / NCIMB 2012 / VKM B-1768 / DS2) (Halobacterium volcanii).